Consider the following 185-residue polypeptide: Protein LPA2 (185 aa).

A chloroplast-targeting transit peptide spans 1–46; that stretch reads MALQIHSPCSFSTRPYHLFFTTRNPRFAIKCQNSQIESDTTEDPSR. Residues 35 to 105 are disordered; sequence QIESDTTEDP…VFMSEEGAAK (71 aa). Residues 47 to 75 are compositionally biased toward low complexity; the sequence is SKNSSSSGVGFGSPASSSSPAKKLSAATS. Positions 83 to 92 are enriched in basic and acidic residues; the sequence is KREVNRRAPV. Helical transmembrane passes span 115-135 and 152-172; these read AFLL…IILA and VYPV…AYGV.

The protein resides in the plastid. It localises to the chloroplast membrane. The polypeptide is Protein LPA2 (Arabidopsis thaliana (Mouse-ear cress)).